Here is a 228-residue protein sequence, read N- to C-terminus: UPF0173 metal-dependent hydrolase BcerKBAB4_4442 (228 aa).

Belongs to the UPF0173 family.

This is UPF0173 metal-dependent hydrolase BcerKBAB4_4442 from Bacillus mycoides (strain KBAB4) (Bacillus weihenstephanensis).